An 87-amino-acid polypeptide reads, in one-letter code: Small ribosomal subunit protein bS20 (87 aa).

The tract at residues 1 to 22 (MANSAQARKRARQSVKQRAHNA) is disordered. Over residues 7 to 19 (ARKRARQSVKQRA) the composition is skewed to basic residues.

This sequence belongs to the bacterial ribosomal protein bS20 family.

Binds directly to 16S ribosomal RNA. The chain is Small ribosomal subunit protein bS20 from Neisseria gonorrhoeae (strain ATCC 700825 / FA 1090).